We begin with the raw amino-acid sequence, 671 residues long: MEPIEQQLTELRTTLRHHEYLYHVMDAPEVPDAEYDRLMRKLRELESQHPELITPDSPTQRVGAAPLTAFSQIRHEVPMLSLDNVFDEESFLAFNKRVQDRLKSTDHLTYCCELKLDGLAVSILYENGVLVQAATRGDGTTGEDITSNVRTIRAIPLKLHGENIPARLEVRGEVFLPQAGFEKINEEARRTGGKVFANPRNAAAGSLRQLDPRITAKRPLTFFCYGVGVLEGGELPASHSARLLQFKAWGLPVSDRVTLCHTPEEVLTYYRKVEEERPHLGFDIDGVVIKVDSLALQEQLGFVARAPRWAVAFKFPAQEQMTFVRDVEFQVGRTGAITPVARLEPVHVAGVLVSNATLHNADEIERLGLKIGDKVVIRRAGDVIPQVVNVVLSERPADARDVVFPTHCPVCQSDVERVEGEAVARCTGGLICGAQRKESLKHFVSRRALDVDGMGDKIIDQLVEKEYVHTPADLFRLTAGKLTGLDRMGPKSAQNVVNALEKAKETTFARFLYALGIREVGEATAAGLAAHFGTLEALEQASIEELQKVPDVGIVVATHTFNFFAEESNRDVIAQLLAEGVRWPAPVVVKAEEIDSPFAGKTVVLTGSLSQLSRDDAKARLVALGAKVAGSVSKKTDLVIAGEAAGSKLAKAQELGIEVIDEAEMMRLLGE.

NAD(+)-binding positions include 32-36 (DAEYD), 81-82 (SL), and E113. K115 functions as the N6-AMP-lysine intermediate in the catalytic mechanism. NAD(+) is bound by residues R136, E173, K290, and K314. Zn(2+) is bound by residues C408, C411, C426, and C432. The 79-residue stretch at 593 to 671 (EIDSPFAGKT…EAEMMRLLGE (79 aa)) folds into the BRCT domain.

Belongs to the NAD-dependent DNA ligase family. LigA subfamily. Mg(2+) serves as cofactor. The cofactor is Mn(2+).

It carries out the reaction NAD(+) + (deoxyribonucleotide)n-3'-hydroxyl + 5'-phospho-(deoxyribonucleotide)m = (deoxyribonucleotide)n+m + AMP + beta-nicotinamide D-nucleotide.. DNA ligase that catalyzes the formation of phosphodiester linkages between 5'-phosphoryl and 3'-hydroxyl groups in double-stranded DNA using NAD as a coenzyme and as the energy source for the reaction. It is essential for DNA replication and repair of damaged DNA. In Klebsiella pneumoniae subsp. pneumoniae (strain ATCC 700721 / MGH 78578), this protein is DNA ligase.